The sequence spans 215 residues: Adenylyl-sulfate kinase (215 aa).

An ATP-binding site is contributed by 46 to 53 (GLSGAGKS). The Phosphoserine intermediate role is filled by serine 120.

The protein belongs to the APS kinase family.

It catalyses the reaction adenosine 5'-phosphosulfate + ATP = 3'-phosphoadenylyl sulfate + ADP + H(+). It functions in the pathway sulfur metabolism; hydrogen sulfide biosynthesis; sulfite from sulfate: step 2/3. Its function is as follows. Catalyzes the synthesis of activated sulfate. This is Adenylyl-sulfate kinase (cysC) from Vibrio cholerae serotype O1 (strain ATCC 39315 / El Tor Inaba N16961).